The sequence spans 343 residues: MPQTLQLTNPMDMHLHLREGEMLSAILPFSANPFSAAVVMPNLKTPITTTAQALAYKRQILSLCSTSFEPLMSIFLTPDLDKQELIRAKEAGIHILKLYPKGSTTGSEKGVKEMLCEKTLHIFEIAQELGFILSIHGESNGFCMEREYEFLPIFAHIAQHFPRLRIIIEHMSDRRSLELIEQYPNLYATLTLHHITMNLDDVLGGGINPHHFCKPMLKTKKDQQALLQAALNAHPKVSFGSDSAPHLESAKLNSKGAAGIFSAPILLPALAEVFAFHNALDCLQTFISNRAIANYKLKHFPIKTITLERVENPVPPYINTPLGHIIPLRAQTNLSWRIKEENR.

2 residues coordinate Zn(2+): H14 and H16. Residues H16 to R18 and N42 each bind substrate. Positions 97, 136, 170, and 242 each coordinate Zn(2+). N6-carboxylysine is present on K97. H136 serves as a coordination point for substrate. The active site involves D242. 2 residues coordinate substrate: H246 and A258.

The protein belongs to the metallo-dependent hydrolases superfamily. DHOase family. Class II DHOase subfamily. In terms of assembly, homodimer. The cofactor is Zn(2+).

It catalyses the reaction (S)-dihydroorotate + H2O = N-carbamoyl-L-aspartate + H(+). It participates in pyrimidine metabolism; UMP biosynthesis via de novo pathway; (S)-dihydroorotate from bicarbonate: step 3/3. Functionally, catalyzes the reversible cyclization of carbamoyl aspartate to dihydroorotate. The sequence is that of Dihydroorotase from Helicobacter hepaticus (strain ATCC 51449 / 3B1).